The primary structure comprises 223 residues: Oxaloacetate tautomerase FAHD1, mitochondrial (223 aa).

The transit peptide at 1–30 (MATSMIQRMFKQGTKIVCVGRNYAAHAKEL) directs the protein to the mitochondrion. The Mg(2+) site is built by E67, E69, and D98.

It belongs to the FAH family. Requires Mg(2+) as cofactor. The cofactor is Mn(2+).

It localises to the mitochondrion. The catalysed reaction is oxaloacetate = enol-oxaloacetate. Tautomerase that converts enol-oxaloacetate, a strong inhibitor of succinate dehydrogenase, to the physiological keto form of oxaloacetate. The chain is Oxaloacetate tautomerase FAHD1, mitochondrial from Arabidopsis thaliana (Mouse-ear cress).